Here is a 428-residue protein sequence, read N- to C-terminus: Serine hydroxymethyltransferase (428 aa).

(6S)-5,6,7,8-tetrahydrofolate-binding positions include leucine 127 and glycine 131–leucine 133. At lysine 236 the chain carries N6-(pyridoxal phosphate)lysine.

This sequence belongs to the SHMT family. In terms of assembly, homodimer. Pyridoxal 5'-phosphate serves as cofactor.

The protein localises to the cytoplasm. It carries out the reaction (6R)-5,10-methylene-5,6,7,8-tetrahydrofolate + glycine + H2O = (6S)-5,6,7,8-tetrahydrofolate + L-serine. Its pathway is one-carbon metabolism; tetrahydrofolate interconversion. It functions in the pathway amino-acid biosynthesis; glycine biosynthesis; glycine from L-serine: step 1/1. Its function is as follows. Catalyzes the reversible interconversion of serine and glycine with tetrahydrofolate (THF) serving as the one-carbon carrier. This reaction serves as the major source of one-carbon groups required for the biosynthesis of purines, thymidylate, methionine, and other important biomolecules. Also exhibits THF-independent aldolase activity toward beta-hydroxyamino acids, producing glycine and aldehydes, via a retro-aldol mechanism. The sequence is that of Serine hydroxymethyltransferase from Tropheryma whipplei (strain TW08/27) (Whipple's bacillus).